The primary structure comprises 396 residues: S100P-binding protein (396 aa).

The interval 145–249 is disordered; that stretch reads CDPVLDKDKI…RKNSGSHKSG (105 aa). 2 stretches are compositionally biased toward basic and acidic residues: residues 148–161 and 168–185; these read VLDK…KETE and EQTR…RCTE. Polar residues-rich tracts occupy residues 202 to 215 and 227 to 246; these read SSPS…TASD and VFSQ…SGSH.

In terms of assembly, interacts with S100P.

The protein localises to the nucleus. The sequence is that of S100P-binding protein from Mus musculus (Mouse).